We begin with the raw amino-acid sequence, 321 residues long: Anthranilate phosphoribosyltransferase (321 aa).

5-phospho-alpha-D-ribose 1-diphosphate is bound by residues glycine 72, 75-76 (GD), threonine 80, 82-85 (NVST), 99-107 (KHGNVSITS), and serine 111. Position 72 (glycine 72) interacts with anthranilate. Serine 84 is a binding site for Mg(2+). Asparagine 102 is an anthranilate binding site. An anthranilate-binding site is contributed by arginine 157. 2 residues coordinate Mg(2+): aspartate 216 and glutamate 217.

It belongs to the anthranilate phosphoribosyltransferase family. As to quaternary structure, homodimer. The cofactor is Mg(2+).

The catalysed reaction is N-(5-phospho-beta-D-ribosyl)anthranilate + diphosphate = 5-phospho-alpha-D-ribose 1-diphosphate + anthranilate. It functions in the pathway amino-acid biosynthesis; L-tryptophan biosynthesis; L-tryptophan from chorismate: step 2/5. In terms of biological role, catalyzes the transfer of the phosphoribosyl group of 5-phosphorylribose-1-pyrophosphate (PRPP) to anthranilate to yield N-(5'-phosphoribosyl)-anthranilate (PRA). This chain is Anthranilate phosphoribosyltransferase, found in Methanococcus maripaludis (strain C7 / ATCC BAA-1331).